The following is a 281-amino-acid chain: NADPH-dependent 7-cyano-7-deazaguanine reductase (281 aa).

Residue 88 to 90 (VES) participates in substrate binding. 90–91 (SK) lines the NADPH pocket. Catalysis depends on Cys189, which acts as the Thioimide intermediate. The active-site Proton donor is the Asp196. 228 to 229 (HE) is a substrate binding site. 257 to 258 (RG) contributes to the NADPH binding site.

Belongs to the GTP cyclohydrolase I family. QueF type 2 subfamily. Homodimer.

The protein localises to the cytoplasm. It catalyses the reaction 7-aminomethyl-7-carbaguanine + 2 NADP(+) = 7-cyano-7-deazaguanine + 2 NADPH + 3 H(+). The protein operates within tRNA modification; tRNA-queuosine biosynthesis. In terms of biological role, catalyzes the NADPH-dependent reduction of 7-cyano-7-deazaguanine (preQ0) to 7-aminomethyl-7-deazaguanine (preQ1). The polypeptide is NADPH-dependent 7-cyano-7-deazaguanine reductase (Klebsiella pneumoniae (strain 342)).